Here is a 261-residue protein sequence, read N- to C-terminus: Fructoselysine 6-kinase (261 aa).

The protein belongs to the carbohydrate kinase PfkB family. As to quaternary structure, monomer.

It catalyses the reaction N(6)-(D-fructosyl)-L-lysine + ATP = N(6)-(6-phospho-D-fructosyl)-L-lysine + ADP + H(+). The protein operates within carbohydrate metabolism; fructoselysine degradation; D-glucose 6-phosphate and lysine from fructoselysine: step 1/2. Functionally, catalyzes the ATP-dependent phosphorylation of fructoselysine to fructoselysine 6-phosphate. May function in a fructoselysine degradation pathway that allows S.flexneri to grow on fructoselysine or psicoselysine. This Shigella flexneri protein is Fructoselysine 6-kinase (frlD).